A 304-amino-acid polypeptide reads, in one-letter code: MNNENMVRVFYVLLMGLGFPIMRFMSIHFETLNNNSVRFLSGGSLFVIICLIKFRSELKKIIGEPKIILYLFIYLFILGIFMTGNMFFFINGLKYTSALAGSIFGILAMPLAIIIAGIFFKDERDRIRQKEFYIGELLAIIGSLIFVINSSNNDGNTDFFLGAIFLFTAIFIQSVQNLIVKKVAKKINAVVISASTATISGVLFLCLAFNTKQIYLLQDVGIGMLIGLVCAGFYGMLTGMLMAFYIVQKQGITVFNILQLLIPLSTAIIGYLTLDERINIYQGISGIIVIIGCVLALKRKNKEC.

The next 9 membrane-spanning stretches (helical) occupy residues 9–29 (VFYV…SIHF), 67–87 (IILY…GNMF), 100–120 (AGSI…GIFF), 131–151 (EFYI…INSS), 159–179 (FFLG…QNLI), 189–209 (AVVI…CLAF), 222–242 (IGML…GMLM), 252–272 (ITVF…IGYL), and 278–298 (INIY…LALK). EamA domains are found at residues 13-148 (LLMG…IFVI) and 171-298 (FIQS…LALK).

The protein belongs to the EamA transporter family.

It is found in the cell membrane. This is an uncharacterized protein from Haemophilus influenzae (strain ATCC 51907 / DSM 11121 / KW20 / Rd).